Here is a 554-residue protein sequence, read N- to C-terminus: Intraflagellar transport protein 56 (554 aa).

The segment at 1–24 (MMLSRAKPAVGRGVQHTDKRKKKG) is disordered. TPR repeat units lie at residues 57–90 (EDTN…ENCN), 92–125 (EVWV…LQNR), 151–184 (TEDQ…NREY), and 468–501 (ANDC…EGKR).

It belongs to the IFT56 family. Component of the IFT complex B. Interacts with IFT46; the interaction is direct.

It localises to the cell projection. It is found in the cilium. Its function is as follows. Component of the intraflagellar transport (IFT) complex B required for transport of proteins in the motile cilium. Required for transport of specific ciliary cargo proteins related to motility, while it is neither required for IFT complex B assembly or motion nor for cilium assembly. Required for efficient coupling between the accumulation of GLI2 and GLI3 at the ciliary tips and their dissociation from the negative regulator SUFU. Plays a key role in maintaining the integrity of the IFT complex B and the proper ciliary localization of the IFT complex B components. Not required for IFT complex A ciliary localization or function. Essential for maintaining proper microtubule organization within the ciliary axoneme. In Homo sapiens (Human), this protein is Intraflagellar transport protein 56.